Here is a 568-residue protein sequence, read N- to C-terminus: Proline--tRNA ligase (568 aa).

This sequence belongs to the class-II aminoacyl-tRNA synthetase family. ProS type 1 subfamily. Homodimer.

It is found in the cytoplasm. The catalysed reaction is tRNA(Pro) + L-proline + ATP = L-prolyl-tRNA(Pro) + AMP + diphosphate. Its function is as follows. Catalyzes the attachment of proline to tRNA(Pro) in a two-step reaction: proline is first activated by ATP to form Pro-AMP and then transferred to the acceptor end of tRNA(Pro). As ProRS can inadvertently accommodate and process non-cognate amino acids such as alanine and cysteine, to avoid such errors it has two additional distinct editing activities against alanine. One activity is designated as 'pretransfer' editing and involves the tRNA(Pro)-independent hydrolysis of activated Ala-AMP. The other activity is designated 'posttransfer' editing and involves deacylation of mischarged Ala-tRNA(Pro). The misacylated Cys-tRNA(Pro) is not edited by ProRS. In Listeria monocytogenes serovar 1/2a (strain ATCC BAA-679 / EGD-e), this protein is Proline--tRNA ligase.